The following is a 248-amino-acid chain: NADP-dependent 3-hydroxy acid dehydrogenase YdfG (248 aa).

Residues 7–12 (GATAGF), 32–33 (RR), 54–55 (DV), and N81 contribute to the NADP(+) site. S134 provides a ligand contact to substrate. NADP(+) contacts are provided by residues Y147, K151, and 177 to 185 (PGLVGGTEF). Catalysis depends on Y147, which acts as the Proton acceptor.

Belongs to the short-chain dehydrogenases/reductases (SDR) family. Homotetramer.

It catalyses the reaction 3-hydroxypropanoate + NADP(+) = 3-oxopropanoate + NADPH + H(+). The catalysed reaction is L-allo-threonine + NADP(+) = aminoacetone + CO2 + NADPH. NADP-dependent dehydrogenase with broad substrate specificity acting on 3-hydroxy acids. Catalyzes the NADP-dependent oxidation of L-allo-threonine to L-2-amino-3-keto-butyrate, which is spontaneously decarboxylated into aminoacetone. Also acts on D-threonine, L-serine, D-serine, D-3-hydroxyisobutyrate, L-3-hydroxyisobutyrate, D-glycerate and L-glycerate. Able to catalyze the reduction of the malonic semialdehyde to 3-hydroxypropionic acid. YdfG is apparently supplementing RutE, the presumed malonic semialdehyde reductase involved in pyrimidine degradation since both are able to detoxify malonic semialdehyde. In Escherichia coli O6:H1 (strain CFT073 / ATCC 700928 / UPEC), this protein is NADP-dependent 3-hydroxy acid dehydrogenase YdfG.